We begin with the raw amino-acid sequence, 308 residues long: tRNA dimethylallyltransferase 1 (308 aa).

ATP is bound at residue 9–16; the sequence is GPTGVGKT. Residue 11-16 coordinates substrate; it reads TGVGKT. Residues 34-37 form an interaction with substrate tRNA region; it reads DSRQ.

Belongs to the IPP transferase family. In terms of assembly, monomer. The cofactor is Mg(2+).

The enzyme catalyses adenosine(37) in tRNA + dimethylallyl diphosphate = N(6)-dimethylallyladenosine(37) in tRNA + diphosphate. Functionally, catalyzes the transfer of a dimethylallyl group onto the adenine at position 37 in tRNAs that read codons beginning with uridine, leading to the formation of N6-(dimethylallyl)adenosine (i(6)A). This Bacteroides thetaiotaomicron (strain ATCC 29148 / DSM 2079 / JCM 5827 / CCUG 10774 / NCTC 10582 / VPI-5482 / E50) protein is tRNA dimethylallyltransferase 1.